A 591-amino-acid chain; its full sequence is Aspartate--tRNA ligase (591 aa).

An L-aspartate-binding site is contributed by Glu-173. An aspartate region spans residues 197–200 (QLFK). Arg-219 is an L-aspartate binding site. ATP contacts are provided by residues 219-221 (RDE) and Gln-228. His-448 contacts L-aspartate. ATP is bound at residue Glu-482. Residue Arg-489 participates in L-aspartate binding. ATP is bound at residue 534–537 (GLDR).

It belongs to the class-II aminoacyl-tRNA synthetase family. Type 1 subfamily. In terms of assembly, homodimer.

It is found in the cytoplasm. The enzyme catalyses tRNA(Asp) + L-aspartate + ATP = L-aspartyl-tRNA(Asp) + AMP + diphosphate. Catalyzes the attachment of L-aspartate to tRNA(Asp) in a two-step reaction: L-aspartate is first activated by ATP to form Asp-AMP and then transferred to the acceptor end of tRNA(Asp). In Shewanella sp. (strain ANA-3), this protein is Aspartate--tRNA ligase.